The following is a 99-amino-acid chain: Protein Frey (99 aa).

A helical membrane pass occupies residues 10–29 (YPRAGLSLFLFYLILAGALL). A disordered region spans residues 60-90 (DYGLRPKHPRPGGPRPLLSQAQQRKRDGPNM).

In terms of assembly, interacts with SPPL2C (via active sites); the interaction stabilizes FREY1 protein and inhibits SPPL2C proteolytic activity. Interacts with IZUMO1; the interaction retains IZUMO1 at the endoplasmic reticulum membrane and coordinates IZUMO1 complex assembly. Expressed in round spermatids (at protein level).

Its subcellular location is the endoplasmic reticulum membrane. Its function is as follows. Key regulator for male fertility expressed transiently in round spermatids where it recruits IZUMO1 at the endoplasmic reticulum (ER) membrane and coordinates the oolemmal binding multimeric complex (IZUMO1 complex) assembly. Upon complete assembly of the IZUMO1 complex, its ER retention is released, facilitating IZUMO1 complex export to the acrosome. Through the interaction with SPPL2C, inhibits its intramembrane protease activity directly accessing the catalytic center of an I-CLiP. In Mus musculus (Mouse), this protein is Protein Frey.